A 179-amino-acid polypeptide reads, in one-letter code: ATP synthase subunit delta (179 aa).

It belongs to the ATPase delta chain family. F-type ATPases have 2 components, F(1) - the catalytic core - and F(0) - the membrane proton channel. F(1) has five subunits: alpha(3), beta(3), gamma(1), delta(1), epsilon(1). F(0) has three main subunits: a(1), b(2) and c(10-14). The alpha and beta chains form an alternating ring which encloses part of the gamma chain. F(1) is attached to F(0) by a central stalk formed by the gamma and epsilon chains, while a peripheral stalk is formed by the delta and b chains.

It localises to the cell inner membrane. Functionally, f(1)F(0) ATP synthase produces ATP from ADP in the presence of a proton or sodium gradient. F-type ATPases consist of two structural domains, F(1) containing the extramembraneous catalytic core and F(0) containing the membrane proton channel, linked together by a central stalk and a peripheral stalk. During catalysis, ATP synthesis in the catalytic domain of F(1) is coupled via a rotary mechanism of the central stalk subunits to proton translocation. In terms of biological role, this protein is part of the stalk that links CF(0) to CF(1). It either transmits conformational changes from CF(0) to CF(1) or is implicated in proton conduction. The protein is ATP synthase subunit delta of Koribacter versatilis (strain Ellin345).